The chain runs to 226 residues: Phosphoglycolate phosphatase (226 aa).

Aspartate 9 functions as the Nucleophile in the catalytic mechanism. Residues aspartate 9 and aspartate 11 each contribute to the Mg(2+) site. A substrate-binding site is contributed by lysine 150. Aspartate 173 and aspartate 177 together coordinate Mg(2+).

Belongs to the archaeal SPP-like hydrolase family. Mg(2+) is required as a cofactor.

It catalyses the reaction 2-phosphoglycolate + H2O = glycolate + phosphate. Functionally, catalyzes the dephosphorylation of 2-phosphoglycolate. The protein is Phosphoglycolate phosphatase of Methanosarcina mazei (strain ATCC BAA-159 / DSM 3647 / Goe1 / Go1 / JCM 11833 / OCM 88) (Methanosarcina frisia).